The primary structure comprises 186 residues: Dynactin subunit 3 (186 aa).

Ala2 bears the N-acetylalanine mark. The stretch at Gln135–Thr157 forms a coiled coil.

It belongs to the dynactin subunit 3 family. Subunit of dynactin, a multiprotein complex part of a tripartite complex with dynein and a adapter, such as BICDL1, BICD2 or HOOK3. The dynactin complex is built around ACTR1A/ACTB filament and consists of an actin-related filament composed of a shoulder domain, a pointed end and a barbed end. Its length is defined by its flexible shoulder domain. The soulder is composed of 2 DCTN1 subunits, 4 DCTN2 and 2 DCTN3. The 4 DCNT2 (via N-terminus) bind the ACTR1A filament and act as molecular rulers to determine the length. The pointed end is important for binding dynein-dynactin cargo adapters. Consists of 4 subunits: ACTR10, DCNT4, DCTN5 and DCTN6. The barbed end is composed of a CAPZA1:CAPZB heterodimers, which binds ACTR1A/ACTB filament and dynactin and stabilizes dynactin.

It is found in the cytoplasm. It localises to the cytoskeleton. The protein localises to the microtubule organizing center. The protein resides in the centrosome. Its subcellular location is the chromosome. It is found in the centromere. It localises to the kinetochore. The protein localises to the spindle. The protein resides in the cleavage furrow. Its subcellular location is the midbody. Its function is as follows. Part of the dynactin complex that activates the molecular motor dynein for ultra-processive transport along microtubules. Together with dynein may be involved in spindle assembly and cytokinesis. This is Dynactin subunit 3 (DCTN3) from Bos taurus (Bovine).